Consider the following 279-residue polypeptide: Thymidylate synthase (279 aa).

141–142 (RR) contributes to the dUMP binding site. Cysteine 161 functions as the Nucleophile in the catalytic mechanism. Residues 181–184 (RSND), asparagine 192, and 222–224 (HVY) contribute to the dUMP site. Aspartate 184 is a binding site for (6R)-5,10-methylene-5,6,7,8-tetrahydrofolate. Position 278 (alanine 278) interacts with (6R)-5,10-methylene-5,6,7,8-tetrahydrofolate.

Belongs to the thymidylate synthase family. Bacterial-type ThyA subfamily. Homodimer.

The protein resides in the cytoplasm. It carries out the reaction dUMP + (6R)-5,10-methylene-5,6,7,8-tetrahydrofolate = 7,8-dihydrofolate + dTMP. It participates in pyrimidine metabolism; dTTP biosynthesis. Its function is as follows. Catalyzes the reductive methylation of 2'-deoxyuridine-5'-monophosphate (dUMP) to 2'-deoxythymidine-5'-monophosphate (dTMP) while utilizing 5,10-methylenetetrahydrofolate (mTHF) as the methyl donor and reductant in the reaction, yielding dihydrofolate (DHF) as a by-product. This enzymatic reaction provides an intracellular de novo source of dTMP, an essential precursor for DNA biosynthesis. The polypeptide is Thymidylate synthase (Bacillus subtilis subsp. natto).